A 461-amino-acid chain; its full sequence is D-phenylhydantoinase (461 aa).

A divalent metal cation contacts are provided by histidine 59, histidine 61, and lysine 151. At lysine 151 the chain carries N6-carboxylysine. Tyrosine 156 provides a ligand contact to substrate. Histidine 182 and histidine 239 together coordinate a divalent metal cation. Substrate is bound at residue serine 286. Aspartate 313 is a binding site for a divalent metal cation. Substrate is bound at residue asparagine 335.

Belongs to the metallo-dependent hydrolases superfamily. Hydantoinase/dihydropyrimidinase family. Homotetramer. The cofactor is a divalent metal cation. Post-translationally, carboxylation allows a single lysine to coordinate two divalent metal cations.

It carries out the reaction D-5-phenylhydantoin + H2O = N-carbamoyl-D-phenylglycine + H(+). Its function is as follows. Catalyzes the stereospecific hydrolysis of the cyclic amide bond of D-hydantoin derivatives with an aromatic side chains at the 5'-position. Has no activity on dihydropyrimidines. The physiological function is unknown. The protein is D-phenylhydantoinase of Shigella boydii serotype 4 (strain Sb227).